We begin with the raw amino-acid sequence, 794 residues long: DNA ligase (794 aa).

Positions 1–47 (MEEDLFSLAAGKQPSQQATNETAPRAGEARENAGTDHPGNAEDPAHR) are disordered. A compositionally biased stretch (polar residues) spans 13 to 22 (QPSQQATNET). Residues 27 to 47 (GEARENAGTDHPGNAEDPAHR) are compositionally biased toward basic and acidic residues. NAD(+) contacts are provided by residues 73–77 (DAEYD), 122–123 (SI), and glutamate 160. The active-site N6-AMP-lysine intermediate is the lysine 162. NAD(+) contacts are provided by arginine 183, glutamate 219, lysine 335, and lysine 359. Zn(2+)-binding residues include cysteine 457, cysteine 460, cysteine 475, and cysteine 480. Positions 717-794 (IPAGSLSGKT…EEDFYKMIGN (78 aa)) constitute a BRCT domain.

Belongs to the NAD-dependent DNA ligase family. LigA subfamily. Mg(2+) serves as cofactor. Requires Mn(2+) as cofactor.

It catalyses the reaction NAD(+) + (deoxyribonucleotide)n-3'-hydroxyl + 5'-phospho-(deoxyribonucleotide)m = (deoxyribonucleotide)n+m + AMP + beta-nicotinamide D-nucleotide.. Its function is as follows. DNA ligase that catalyzes the formation of phosphodiester linkages between 5'-phosphoryl and 3'-hydroxyl groups in double-stranded DNA using NAD as a coenzyme and as the energy source for the reaction. It is essential for DNA replication and repair of damaged DNA. The sequence is that of DNA ligase from Akkermansia muciniphila (strain ATCC BAA-835 / DSM 22959 / JCM 33894 / BCRC 81048 / CCUG 64013 / CIP 107961 / Muc).